Here is a 1885-residue protein sequence, read N- to C-terminus: Chitin synthase 5 (1885 aa).

Residues Met1–Ala789 form the Myosin motor domain. Gly99–Thr106 is a binding site for ATP. N-linked (GlcNAc...) asparagine glycans are attached at residues Asn219 and Asn429. The interval Lys601–Pro649 is disordered. Over residues Ser609–Ser621 the composition is skewed to basic residues. Residues Leu666–Asp690 are actin-binding. Asn668 carries N-linked (GlcNAc...) asparagine glycosylation. The tract at residues Gly794–Leu817 is disordered. 2 consecutive transmembrane segments (helical) span residues Trp894–Gly914 and Phe929–Phe949. The Cytochrome b5 heme-binding domain occupies Gln957–Phe1016. N-linked (GlcNAc...) asparagine glycosylation is found at Asn1043 and Asn1068. A helical transmembrane segment spans residues Ile1205 to Leu1225. N-linked (GlcNAc...) asparagine glycosylation is found at Asn1462 and Asn1568. Transmembrane regions (helical) follow at residues Leu1599 to Leu1619, Val1626 to Ile1646, and Met1653 to Leu1673. 2 N-linked (GlcNAc...) asparagine glycosylation sites follow: Asn1759 and Asn1790. The DEK-C domain maps to Leu1827 to Ser1882.

It in the N-terminal section; belongs to the TRAFAC class myosin-kinesin ATPase superfamily. Myosin family. In the C-terminal section; belongs to the chitin synthase family. Class V subfamily. In terms of processing, maximal activity requires trypsin activation, suggesting a zymogenic nature.

It localises to the cell membrane. Its subcellular location is the membrane. The enzyme catalyses [(1-&gt;4)-N-acetyl-beta-D-glucosaminyl](n) + UDP-N-acetyl-alpha-D-glucosamine = [(1-&gt;4)-N-acetyl-beta-D-glucosaminyl](n+1) + UDP + H(+). Functionally, polymerizes chitin, a structural polymer of the cell wall and septum, by transferring the sugar moiety of UDP-GlcNAc to the non-reducing end of the growing chitin polymer. CHS5 is required for the sustained growth at 37 degrees Celsius and is of critical importance for virulence. Especially important at infection temperatures for maintaining the cell wall integrity of developing yeast buds, elongating tips of hyphae, and random sites of expansion in sclerotic forms. The protein is Chitin synthase 5 of Exophiala dermatitidis (strain ATCC 34100 / CBS 525.76 / NIH/UT8656) (Black yeast).